The sequence spans 108 residues: Class I hydrophobin eas (108 aa).

The signal sequence occupies residues 1-26 (MQFTSVFTILAIAMTAAAAPAEVVPR). 4 disulfide bridges follow: Cys35–Cys86, Cys44–Cys80, Cys45–Cys71, and Cys87–Cys106.

It belongs to the fungal hydrophobin family. In terms of assembly, self-assembles to form functional amyloid fibrils called rodlets. Self-assembly into fibrillar rodlets occurs spontaneously at hydrophobic:hydrophilic interfaces and the rodlets further associate laterally to form amphipathic monolayers.

The protein resides in the secreted. It is found in the spore wall. In terms of biological role, aerial growth, conidiation, and dispersal of filamentous fungi in the environment rely upon a capability of their secreting small amphipathic proteins called hydrophobins (HPBs) with low sequence identity. Class I can self-assemble into an outermost layer of rodlet bundles on aerial cell surfaces, conferring cellular hydrophobicity that supports fungal growth, development and dispersal; whereas class II form highly ordered films at water-air interfaces through intermolecular interactions but contribute nothing to the rodlet structure. Eas is a class I hydrophobin that forms functional amyloid fibrils called rodlets that facilitate spore formation and dispersal. The polypeptide is Class I hydrophobin eas (Neurospora crassa (strain ATCC 24698 / 74-OR23-1A / CBS 708.71 / DSM 1257 / FGSC 987)).